We begin with the raw amino-acid sequence, 340 residues long: Anthranilate phosphoribosyltransferase (340 aa).

Residues Gly-79, 82–83, Ser-87, 89–92, 107–115, and Ser-119 each bind 5-phospho-alpha-D-ribose 1-diphosphate; these read GD, NIST, and KHGNRSVSS. Gly-79 is a binding site for anthranilate. Ser-91 serves as a coordination point for Mg(2+). Asn-110 contributes to the anthranilate binding site. Residue Arg-165 participates in anthranilate binding. Mg(2+) is bound by residues Asp-224 and Glu-225.

It belongs to the anthranilate phosphoribosyltransferase family. As to quaternary structure, homodimer. Requires Mg(2+) as cofactor.

It catalyses the reaction N-(5-phospho-beta-D-ribosyl)anthranilate + diphosphate = 5-phospho-alpha-D-ribose 1-diphosphate + anthranilate. The protein operates within amino-acid biosynthesis; L-tryptophan biosynthesis; L-tryptophan from chorismate: step 2/5. Its function is as follows. Catalyzes the transfer of the phosphoribosyl group of 5-phosphorylribose-1-pyrophosphate (PRPP) to anthranilate to yield N-(5'-phosphoribosyl)-anthranilate (PRA). The protein is Anthranilate phosphoribosyltransferase of Oceanobacillus iheyensis (strain DSM 14371 / CIP 107618 / JCM 11309 / KCTC 3954 / HTE831).